A 183-amino-acid chain; its full sequence is Efficient mitochondria targeting-associated protein 19 (183 aa).

Residues 1-25 lie on the Cytoplasmic side of the membrane; sequence MKVVSLRRIYSSEIYKLPTTRLHMD. The 133-residue stretch at 24–156 folds into the EXPERA domain; sequence MDTLYYYYFV…PYLAIPLWMA (133 aa). The chain crosses the membrane as a helical span at residues 26-46; sequence TLYYYYFVSHLAAALFVDLPI. At 47 to 81 the chain is on the lumenal side; the sequence is TEWLGGSLSCLSGLRRFYLSTYEDPILLIPAPWKT. Residues 82-102 form a helical membrane-spanning segment; the sequence is ALFSSELFFQVPFFIWVSLRL. Residues 103 to 110 are Cytoplasmic-facing; the sequence is RKKARDPV. The chain crosses the membrane as a helical span at residues 111-131; sequence LWVAILIYGVHAFTTTWCCMF. The Lumenal portion of the chain corresponds to 132-138; that stretch reads ELFAEKK. A helical transmembrane segment spans residues 139 to 159; the sequence is WMIMSFYFPYLAIPLWMAIDM. At 160–183 the chain is on the cytoplasmic side; the sequence is GGRLVKSCHAAKSGPSSTITSKSD.

Belongs to the TMEM97/sigma-2 receptor family.

The protein resides in the endoplasmic reticulum membrane. Part of an import route for newly synthesized mitochondrial proteins termed the ER-SURF pathway (ER surface-mediated protein targeting), which retrieves mitochondrial precursor proteins from the ER surface and reroutes them to mitochondria for efficient mitochondrial import. Acts as a quality control factor in the ER, promoting the proteolytic degradation of nonproductive and extramitochondrial precursor proteins in the ER membrane thus removing them from the ER surface. In Schizosaccharomyces pombe (strain 972 / ATCC 24843) (Fission yeast), this protein is Efficient mitochondria targeting-associated protein 19 (ema19).